The following is a 564-amino-acid chain: 2-succinyl-5-enolpyruvyl-6-hydroxy-3-cyclohexene-1-carboxylate synthase (564 aa).

This sequence belongs to the TPP enzyme family. MenD subfamily. As to quaternary structure, homodimer. Mg(2+) is required as a cofactor. It depends on Mn(2+) as a cofactor. The cofactor is thiamine diphosphate.

The enzyme catalyses isochorismate + 2-oxoglutarate + H(+) = 5-enolpyruvoyl-6-hydroxy-2-succinyl-cyclohex-3-ene-1-carboxylate + CO2. It functions in the pathway quinol/quinone metabolism; 1,4-dihydroxy-2-naphthoate biosynthesis; 1,4-dihydroxy-2-naphthoate from chorismate: step 2/7. Its pathway is quinol/quinone metabolism; menaquinone biosynthesis. Functionally, catalyzes the thiamine diphosphate-dependent decarboxylation of 2-oxoglutarate and the subsequent addition of the resulting succinic semialdehyde-thiamine pyrophosphate anion to isochorismate to yield 2-succinyl-5-enolpyruvyl-6-hydroxy-3-cyclohexene-1-carboxylate (SEPHCHC). The sequence is that of 2-succinyl-5-enolpyruvyl-6-hydroxy-3-cyclohexene-1-carboxylate synthase from Vibrio vulnificus (strain YJ016).